The sequence spans 574 residues: Lengsin (574 aa).

Disordered regions lie at residues 1–36 (MNDEGDLLQENTRDEGNETEASRMSKLRRTRKKVTK) and 66–131 (GNMS…IPTT). Over residues 11–23 (NTRDEGNETEASR) the composition is skewed to basic and acidic residues. Residues 25 to 36 (SKLRRTRKKVTK) are compositionally biased toward basic residues. The segment covering 91–131 (NQTTVIKPSPLKTSASAPCSEFNTNSNHADNTWEDTQIPTT) has biased composition (polar residues). The 95-residue stretch at 148–242 (NHLQFVRFEA…VICDTFTVTG (95 aa)) folds into the GS beta-grasp domain. The GS catalytic domain maps to 249 to 574 (PRYIAKRQLS…ERNKFLEYFI (326 aa)).

This sequence belongs to the glutamine synthetase family. Dodecamer. Interacts with BFSP2 and VIM.

Functionally, may act as a component of the cytoskeleton or as a chaperone for the reorganization of intermediate filament proteins during terminal differentiation in the lens. Does not seem to have enzymatic activity. The chain is Lengsin (LGSN) from Canis lupus familiaris (Dog).